Here is a 1483-residue protein sequence, read N- to C-terminus: Heme-responsive zinc finger transcription factor HAP1 (1483 aa).

Positions 1 to 50 (MSNTPYNSSVPSIASMTQSSVSRSPNMHTATTPGANTSSNSPPLHMSSDS) are enriched in polar residues. Residues 1-56 (MSNTPYNSSVPSIASMTQSSVSRSPNMHTATTPGANTSSNSPPLHMSSDSSKIKRK) form a disordered region. 6 residues coordinate Zn(2+): C64, C67, C74, C81, C84, and C93. The segment at residues 64 to 93 (CTICRKRKVKCDKLRPHCQQCTKTGVAHLC) is a DNA-binding region (zn(2)-C6 fungal-type). Residues 105-134 (EKELLKDNELKKLRERVKSLEKTLSKVHSS) are a coiled coil. Over residues 162 to 176 (VNANTGSASSASHMH) the composition is skewed to polar residues. Residues 162-208 (VNANTGSASSASHMHQQQQQQQQQEQQQDFSRSANANANSSSLSISN) form a disordered region. The segment covering 177–208 (QQQQQQQQQEQQQDFSRSANANANSSSLSISN) has biased composition (low complexity). The segment at 244-444 (KGDPYLKLLW…NTIPHHQPQS (201 aa)) is heme-responsive; required for HMC formation. HRM repeat units lie at residues 280–285 (KCPINH), 299–304 (KCPVDH), 323–328 (KCPVDH), 347–352 (RCPVDH), 389–394 (KCPVDH), and 415–420 (RCPIDH). Polar residues-rich tracts occupy residues 432–447 (STHN…SGSH) and 706–734 (QLNA…NPTL). Disordered regions lie at residues 432–458 (STHN…NRKH) and 706–767 (QLNA…KENQ). Positions 735 to 759 (NNNMSAATTNSSSRSGSADSRSGSN) are enriched in low complexity. An HRM 7 repeat occupies 1192–1197 (KCPVYQ). Disordered stretches follow at residues 1266–1289 (DGYI…SNGL) and 1386–1411 (NTDT…ASNS). Over residues 1388–1411 (DTSANGSALSTLTSPQGSDLASNS) the composition is skewed to polar residues.

As to quaternary structure, binds DNA as a homodimer. Interacts with SRO9 and YDJ1. In the absence of heme, binds to at least four cellular proteins, including YDJ1 and SRO9, forming a high-molecular-weight complex (HMC) which results in repression of its activity and dictates its DNA-binding specificity.

The protein resides in the nucleus. Regulation of oxygen dependent gene expression. It modulates the expression of Iso-1 (CYP1) and Iso-2 (CYP3) cytochrome c. In response to heme, promotes transcription of genes encoding functions required for respiration, controlling oxidative damage and repression of anaerobic genes. Binds to the sequence 5'-CGGNNNTNNCGG-3'. The chain is Heme-responsive zinc finger transcription factor HAP1 (HAP1) from Saccharomyces cerevisiae (strain JAY291) (Baker's yeast).